The following is a 212-amino-acid chain: Spore germination lipase LipC (212 aa).

Serine 11 serves as the catalytic Nucleophile. Substrate contacts are provided by glycine 50 and asparagine 82. Active-site residues include aspartate 186 and histidine 189.

It belongs to the 'GDSL' lipolytic enzyme family.

The protein resides in the spore coat. Its function is as follows. Lipase involved in spore germination. This chain is Spore germination lipase LipC (lipC), found in Bacillus licheniformis (strain ATCC 14580 / DSM 13 / JCM 2505 / CCUG 7422 / NBRC 12200 / NCIMB 9375 / NCTC 10341 / NRRL NRS-1264 / Gibson 46).